Here is a 115-residue protein sequence, read N- to C-terminus: UPF0102 protein NMB2089 (115 aa).

Belongs to the UPF0102 family.

The chain is UPF0102 protein NMB2089 from Neisseria meningitidis serogroup B (strain ATCC BAA-335 / MC58).